A 436-amino-acid polypeptide reads, in one-letter code: Glutamyl-tRNA reductase (436 aa).

Substrate contacts are provided by residues 49 to 52, serine 109, 114 to 116, and glutamine 120; these read TCNR and EGQ. Catalysis depends on cysteine 50, which acts as the Nucleophile. 198–203 serves as a coordination point for NADP(+); the sequence is GAGRMS.

The protein belongs to the glutamyl-tRNA reductase family. As to quaternary structure, homodimer.

It carries out the reaction (S)-4-amino-5-oxopentanoate + tRNA(Glu) + NADP(+) = L-glutamyl-tRNA(Glu) + NADPH + H(+). The protein operates within porphyrin-containing compound metabolism; protoporphyrin-IX biosynthesis; 5-aminolevulinate from L-glutamyl-tRNA(Glu): step 1/2. It functions in the pathway porphyrin-containing compound metabolism; chlorophyll biosynthesis. Catalyzes the NADPH-dependent reduction of glutamyl-tRNA(Glu) to glutamate 1-semialdehyde (GSA). This Prochlorococcus marinus (strain MIT 9215) protein is Glutamyl-tRNA reductase.